Reading from the N-terminus, the 86-residue chain is Large ribosomal subunit protein bL31B (86 aa).

Belongs to the bacterial ribosomal protein bL31 family. Type B subfamily. As to quaternary structure, part of the 50S ribosomal subunit.

This chain is Large ribosomal subunit protein bL31B, found in Vibrio campbellii (strain ATCC BAA-1116).